The primary structure comprises 266 residues: Indole-3-glycerol phosphate synthase (266 aa).

It belongs to the TrpC family.

It catalyses the reaction 1-(2-carboxyphenylamino)-1-deoxy-D-ribulose 5-phosphate + H(+) = (1S,2R)-1-C-(indol-3-yl)glycerol 3-phosphate + CO2 + H2O. It functions in the pathway amino-acid biosynthesis; L-tryptophan biosynthesis; L-tryptophan from chorismate: step 4/5. The sequence is that of Indole-3-glycerol phosphate synthase from Janthinobacterium sp. (strain Marseille) (Minibacterium massiliensis).